Consider the following 33-residue polypeptide: Neutrophil defensin 3 (33 aa).

3 cysteine pairs are disulfide-bonded: Cys-3-Cys-31, Cys-5-Cys-20, and Cys-10-Cys-30.

Belongs to the alpha-defensin family.

The protein resides in the secreted. Its function is as follows. Anti-fungal and bactericidal activity, greater against Gram-positive bacteria. This Mesocricetus auratus (Golden hamster) protein is Neutrophil defensin 3.